We begin with the raw amino-acid sequence, 293 residues long: GTP cyclohydrolase FolE2 (293 aa).

Belongs to the GTP cyclohydrolase IV family.

It carries out the reaction GTP + H2O = 7,8-dihydroneopterin 3'-triphosphate + formate + H(+). It participates in cofactor biosynthesis; 7,8-dihydroneopterin triphosphate biosynthesis; 7,8-dihydroneopterin triphosphate from GTP: step 1/1. Its function is as follows. Converts GTP to 7,8-dihydroneopterin triphosphate. The chain is GTP cyclohydrolase FolE2 from Pseudomonas entomophila (strain L48).